Consider the following 91-residue polypeptide: NADH-ubiquinone oxidoreductase chain 4L (91 aa).

Helical transmembrane passes span 8-28, 38-58, and 59-79; these read LYFIGMLMLFINRHFLMMILL, LLMLCIYFCFFNLLSIFVFLI, and SIVCEAGLALSLLVMMSFFYG.

The protein belongs to the complex I subunit 4L family.

It is found in the mitochondrion membrane. The catalysed reaction is a ubiquinone + NADH + 5 H(+)(in) = a ubiquinol + NAD(+) + 4 H(+)(out). Functionally, core subunit of the mitochondrial membrane respiratory chain NADH dehydrogenase (Complex I) that is believed to belong to the minimal assembly required for catalysis. Complex I functions in the transfer of electrons from NADH to the respiratory chain. The immediate electron acceptor for the enzyme is believed to be ubiquinone. The polypeptide is NADH-ubiquinone oxidoreductase chain 4L (ND4L) (Rhipicephalus sanguineus (Brown dog tick)).